A 715-amino-acid chain; its full sequence is Zinc finger protein 544 (715 aa).

The KRAB domain maps to 14-85; sequence VCFEDVAMAF…EQEAPRDWKA (72 aa). Residues K273 and K289 each participate in a glycyl lysine isopeptide (Lys-Gly) (interchain with G-Cter in SUMO2) cross-link. The segment at 354–374 adopts a C2H2-type 1; atypical zinc-finger fold; it reads SVCNQCGKSFSCCKLIHQRTH. C2H2-type zinc fingers lie at residues 380-402, 408-430, 436-458, 464-486, 492-514, 520-542, 548-570, 576-598, 604-626, 632-654, 660-682, and 688-710; these read FECTQCGKSFSQSYDLVIHQRTH, YECDLCGKSFTQRSKLITHQRIH, YQCIECRKSFRWNSNLIVHQRIH, YECTHCGKSFSQSYELVTHKRTH, FKCTQCGKSFSQKYDLVVHQRTH, YECNLCGKSFSQSSKLITHQRIH, YQCIECGKSFRWNSNLVIHQRIH, YDCTHCGKSFSQSYQLVAHKRTH, YECNECGKAFNRSTQLIRHLQIH, YKCNQCNKAFARSSYLVMHQRTH, FECSQCGKAFSGSSNLLSHHRIH, and YECSDCGKSFRQQSQLVVHRRTH. K534 is covalently cross-linked (Glycyl lysine isopeptide (Lys-Gly) (interchain with G-Cter in SUMO2)).

The protein belongs to the krueppel C2H2-type zinc-finger protein family.

The protein resides in the nucleus. Its function is as follows. May be involved in transcriptional regulation. The protein is Zinc finger protein 544 (ZNF544) of Homo sapiens (Human).